The sequence spans 322 residues: Cytochrome c biogenesis protein CcsA (322 aa).

Transmembrane regions (helical) follow at residues 17 to 37 (VVSIVITIHLITLLVDEIVGL), 44 to 64 (GMIATFFCITGLLVTRWIYLG), 71 to 91 (LYESLIFLSWSFSIIHIVPYF), 98 to 118 (LSALTAPSAIFTQGFATSGLL), 143 to 163 (MVLGYAALLCGSLLSVALLVI), 225 to 245 (VISLGFLFLTIGILSGAVWAN), 258 to 273 (ETWAFITWTIFAIYLH), and 286 to 306 (AIVASMGFLIIWICYFGVNLL).

Belongs to the CcmF/CycK/Ccl1/NrfE/CcsA family. As to quaternary structure, may interact with Ccs1.

The protein localises to the plastid. It localises to the chloroplast thylakoid membrane. Required during biogenesis of c-type cytochromes (cytochrome c6 and cytochrome f) at the step of heme attachment. The protein is Cytochrome c biogenesis protein CcsA of Vitis vinifera (Grape).